The chain runs to 312 residues: Acetaldehyde dehydrogenase (312 aa).

Position 12-15 (12-15 (SGNI)) interacts with NAD(+). The Acyl-thioester intermediate role is filled by Cys132. NAD(+) is bound by residues 163-171 (SAGPGTRAN) and Asn290.

It belongs to the acetaldehyde dehydrogenase family. As to quaternary structure, heterotetramer composed of two DmpG (aldolase) and two DmpF (dehydrogenase) subunits, which allows a direct channeling of acetaldehyde between the two active sites.

The enzyme catalyses acetaldehyde + NAD(+) + CoA = acetyl-CoA + NADH + H(+). It functions in the pathway aromatic compound metabolism; phenol degradation. Is not activated by Mn(2+), Mg(2+), Ca(2+), Zn(2+) or Co(2+). Its function is as follows. Catalyzes the conversion of acetaldehyde to acetyl-CoA, using NAD(+) and coenzyme A. Can also act on propanal and butanal to form propanoyl-CoA and butanoyl-CoA, respectively. Is the final enzyme in the meta-cleavage pathway for the degradation of aromatic compounds such as phenols, cresols and catechols. NADP(+) can replace NAD(+) but the rate of reaction is much slower. The protein is Acetaldehyde dehydrogenase (dmpF) of Pseudomonas sp. (strain CF600).